A 207-amino-acid chain; its full sequence is Alpha-1-acid glycoprotein 1 (207 aa).

A signal peptide spans 1 to 18 (MALHTVLIILSLLPMLEA). Position 19 is a pyrrolidone carboxylic acid (Gln-19). N-linked (GlcNAc...) asparagine glycosylation is found at Asn-25, Asn-34, Asn-76, Asn-94, and Asn-104. Residues Cys-91 and Cys-184 are joined by a disulfide bond.

It belongs to the calycin superfamily. Lipocalin family.

Its subcellular location is the secreted. Functions as a transport protein in the blood stream. Binds various ligands in the interior of its beta-barrel domain. Appears to function in modulating the activity of the immune system during the acute-phase reaction. In Mus musculus (Mouse), this protein is Alpha-1-acid glycoprotein 1 (Orm1).